We begin with the raw amino-acid sequence, 169 residues long: ATP-dependent Clp protease adapter protein CLPS2, chloroplastic (169 aa).

Residues 1 to 33 constitute a chloroplast transit peptide; that stretch reads MLATRCKCNLPSRSFVAPARSVRTRALHVEGRF. Residues 67–92 form a disordered region; sequence DAKTDNGNNGSNTDKDKKSPPGGGNY.

This sequence belongs to the ClpS family.

Its subcellular location is the plastid. The protein resides in the chloroplast stroma. In terms of biological role, small adapter protein that modulate the activity of plastid Clp protease system (CLPC). Probably involved in substrate selection for plastid CLPC. The sequence is that of ATP-dependent Clp protease adapter protein CLPS2, chloroplastic from Chlamydomonas reinhardtii (Chlamydomonas smithii).